We begin with the raw amino-acid sequence, 277 residues long: S-formylglutathione hydrolase FrmB (277 aa).

Catalysis depends on charge relay system residues Ser-145, Asp-221, and His-254.

It belongs to the esterase D family.

The enzyme catalyses S-formylglutathione + H2O = formate + glutathione + H(+). In terms of biological role, serine hydrolase involved in the detoxification of formaldehyde. Hydrolyzes S-formylglutathione to glutathione and formate. This Escherichia coli O157:H7 protein is S-formylglutathione hydrolase FrmB (frmB).